Reading from the N-terminus, the 360-residue chain is Protein RecA (360 aa).

Residue 65–72 coordinates ATP; that stretch reads GPESSGKT.

This sequence belongs to the RecA family.

The protein localises to the cytoplasm. Can catalyze the hydrolysis of ATP in the presence of single-stranded DNA, the ATP-dependent uptake of single-stranded DNA by duplex DNA, and the ATP-dependent hybridization of homologous single-stranded DNAs. It interacts with LexA causing its activation and leading to its autocatalytic cleavage. This chain is Protein RecA, found in Tolumonas auensis (strain DSM 9187 / NBRC 110442 / TA 4).